Reading from the N-terminus, the 93-residue chain is UPF0358 protein BLi01701/BL02974 (93 aa).

Belongs to the UPF0358 family.

The protein is UPF0358 protein BLi01701/BL02974 of Bacillus licheniformis (strain ATCC 14580 / DSM 13 / JCM 2505 / CCUG 7422 / NBRC 12200 / NCIMB 9375 / NCTC 10341 / NRRL NRS-1264 / Gibson 46).